The following is a 152-amino-acid chain: Ribosome maturation factor RimP (152 aa).

It belongs to the RimP family.

The protein localises to the cytoplasm. Functionally, required for maturation of 30S ribosomal subunits. This Porphyromonas gingivalis (strain ATCC BAA-308 / W83) protein is Ribosome maturation factor RimP.